A 985-amino-acid polypeptide reads, in one-letter code: Alpha-glucosidase (985 aa).

The signal sequence occupies residues 1–25 (MVKLTHLLARAWLVPLAYGASQSLL). Thr-36 carries O-linked (Man) threonine glycosylation. N-linked (GlcNAc...) asparagine glycosylation is found at Asn-124, Asn-143, Asn-218, Asn-347, and Asn-422. The Nucleophile role is filled by Asp-490. The active site involves Glu-493. Asn-506, Asn-534, and Asn-537 each carry an N-linked (GlcNAc...) asparagine glycan. O-linked (Man) serine glycosylation is found at Ser-545 and Ser-550. The O-linked (Man) threonine glycan is linked to Thr-559. O-linked (Man) serine glycosylation occurs at Ser-560. An O-linked (Man) threonine glycan is attached at Thr-561. Ser-562 carries O-linked (Man) serine glycosylation. The O-linked (Man) threonine glycan is linked to Thr-571. 2 N-linked (GlcNAc...) asparagine glycosylation sites follow: Asn-601 and Asn-623. The active-site Proton donor is the Asp-660. 2 N-linked (GlcNAc...) asparagine glycosylation sites follow: Asn-835 and Asn-881. O-linked (Man) serine glycosylation occurs at Ser-895. N-linked (GlcNAc...) asparagine glycosylation is found at Asn-899, Asn-957, and Asn-970.

It belongs to the glycosyl hydrolase 31 family. Post-translationally, the O-linked saccharide is not identified, but is probably mannose.

It catalyses the reaction Hydrolysis of terminal, non-reducing (1-&gt;4)-linked alpha-D-glucose residues with release of alpha-D-glucose.. Hydrolyzes malto-oligosaccharides, but has a low activity toward soluble starch. In Aspergillus niger, this protein is Alpha-glucosidase (aglA).